We begin with the raw amino-acid sequence, 485 residues long: Glycogen synthase (485 aa).

Lys-15 lines the ADP-alpha-D-glucose pocket.

The protein belongs to the glycosyltransferase 1 family. Bacterial/plant glycogen synthase subfamily.

The enzyme catalyses [(1-&gt;4)-alpha-D-glucosyl](n) + ADP-alpha-D-glucose = [(1-&gt;4)-alpha-D-glucosyl](n+1) + ADP + H(+). It functions in the pathway glycan biosynthesis; glycogen biosynthesis. In terms of biological role, synthesizes alpha-1,4-glucan chains using ADP-glucose. This is Glycogen synthase from Thermosipho africanus (strain TCF52B).